Here is a 232-residue protein sequence, read N- to C-terminus: Large ribosomal subunit protein uL1 (232 aa).

This sequence belongs to the universal ribosomal protein uL1 family. As to quaternary structure, part of the 50S ribosomal subunit.

Its function is as follows. Binds directly to 23S rRNA. The L1 stalk is quite mobile in the ribosome, and is involved in E site tRNA release. In terms of biological role, protein L1 is also a translational repressor protein, it controls the translation of the L11 operon by binding to its mRNA. This is Large ribosomal subunit protein uL1 from Burkholderia vietnamiensis (strain G4 / LMG 22486) (Burkholderia cepacia (strain R1808)).